We begin with the raw amino-acid sequence, 2016 residues long: Cell adhesion molecule Dscam1 (2016 aa).

Positions 1-28 are cleaved as a signal peptide; it reads MNMPNERLKWLMLFAAVALIACGSQTLA. Over 29–1618 the chain is Extracellular; sequence ANPPDADQKG…TIRIILSNLN (1590 aa). Ig-like C2-type domains lie at 39–134, 138–230, 247–338, 342–421, 428–522, 527–613, 618–712, 715–807, and 812–904; these read PVFL…VHVR, AQYY…TRLS, PKIN…TVLT, PLSA…AELK, PPVI…AKLN, PYIR…LEVQ, PQVL…LQVN, PRWI…IMIS, and PEFT…ASIN. The N-linked (GlcNAc...) asparagine glycan is linked to Asn-53. Cys-61 and Cys-117 are disulfide-bonded. Asp-144, Asn-146, and Leu-161 together coordinate Zn(2+). Intrachain disulfides connect Cys-160/Cys-217, Cys-160/Thr-219, Cys-160/Lys-220, Cys-269/Cys-322, Pro-270/Val-323, Ala-276/Gly-329, Cys-364/Cys-405, Cys-450/Cys-506, Cys-547/Cys-596, Cys-640/Cys-694, Val-641/Cys-694, Val-641/Ile-695, and Cys-736/Cys-790. Residue Asn-325 is glycosylated (N-linked (GlcNAc...) asparagine). 2 N-linked (GlcNAc...) asparagine glycosylation sites follow: Asn-492 and Asn-577. A glycan (N-linked (GlcNAc...) asparagine) is linked at Asn-820. An intrachain disulfide couples Cys-833 to Cys-890. Fibronectin type-III domains lie at 913 to 1007, 1012 to 1116, 1117 to 1213, and 1217 to 1310; these read MPYA…TAEE, KPQN…TPSQ, PPSD…TEPD, and APTD…PSDQ. 3 N-linked (GlcNAc...) asparagine glycosylation sites follow: Asn-1022, Asn-1055, and Asn-1186. Residues 1312-1394 form the Ig-like C2-type 10 domain; the sequence is PAKIASFDDT…ENSIAKDSIT (83 aa). A disulfide bond links Cys-1334 and Cys-1382. Fibronectin type-III domains are found at residues 1402–1495 and 1499–1594; these read PPQS…TKGQ and LPEK…TGGT. A helical membrane pass occupies residues 1619-1639; it reads LVVPVVAALLVIIIAIIVICI. Topologically, residues 1640–2016 are cytoplasmic; it reads LRSKGNHHKD…GFTAYDTMAV (377 aa). The PXXP motif 1; SH3-binding signature appears at 1685-1688; sequence PPVP. The segment at 1688–1719 is disordered; that stretch reads PGSNYNTCDRIKRGRGGLRSNHSTWDPRRNPN. The short motif at 1727–1730 is the PXXP motif 2; SH3-binding element; it reads PPVP. Disordered stretches follow at residues 1787 to 1846 and 1862 to 2016; these read GHAG…DDPA and SQGG…TMAV. Residues 1826–1836 are compositionally biased toward polar residues; that stretch reads KNSQGGQSSIY. The YXXP motif 1; potential SH2-binding motif lies at 1842 to 1845; the sequence is YDDP. Positions 1875-1878 match the YXXP motif 2; potential SH2-binding motif; the sequence is YDDP. Over residues 1897–1918 the composition is skewed to low complexity; sequence GQPYDHYGSRGSMGRRSIGSAR. Residues 1925 to 1932 carry the Polyproline tract (probable SH3-binding) motif; sequence PEPPPPPP. Basic and acidic residues-rich tracts occupy residues 1944-1962 and 1974-1993; these read DSKESNEISEAECDRDHGP and QPKDQRTTEEMRKLIERNET. Over residues 1994–2004 the composition is skewed to polar residues; it reads GPKQLQLQQAN.

In terms of assembly, homodimer (via extracellular region); alternative splicing produces a potential 19,008 different ectodomains and the majority of these show strong isoform-specific homodimerization. Interacts (via cytoplasmic domain) with dock/dreadlocks (via SH2 and SH3 domains); the interaction is direct and may require Dscam1 to be phosphorylated. Post-translationally, phosphorylated on tyrosine residues in the intracellular domain. Tyrosine protein kinase Src42A and possibly Src64B are involved in this phosphorylation. In terms of processing, glycosylation on Asn-53 and Asn-325 is involved in stabilizing dimerization. Proteolytically processed, probably to generate a secreted form. Secreted into the hemolymph (at protein level). Expressed in brain and eye-antennal imaginal disks, including R3/R4 and R7 photoreceptor cells. Individual R3/R4 cells express between 14 and 50 randomly generated mRNAs encoding distinct isoforms.

It localises to the cell membrane. The protein resides in the cell projection. It is found in the neuron projection. Its subcellular location is the axon. The protein localises to the perikaryon. It localises to the dendrite. The protein resides in the secreted. In terms of biological role, cell surface receptor involved in guidance and targeting of growing nerve axons. Required during Bolwig's organ differentiation for accurate and efficient targeting of photoreceptor neuron axons to their synaptic targets in the brain via the P2 intermediate target neuron. Involved in isoneural self-avoidance during dendrite arborization but not in heteroneural recognition and repulsion during tiling by related neurons of the same class. Involved in regulating axon bifurcation and divergent extension in the developing mushroom body. Essential for axon arborisation in ellipsoid body. Exhibits an extraordinary level of molecular diversity resulting from alternative splicing. Isoforms differing in their ectodomain makeup show a high degree of functional redundancy while isoforms with different transmembrane domains are involved in different neuronal morphogenetic processes and are differentially targeted to dendrites or axons. The vast majority of isoforms exhibit strong isoform-specific homophilic binding. Individual cells express a distinct randomly generated repertoire of isoforms. Cell surfaces bearing identical repertoires of Dscam1 isoforms, such as those from the same cell, trigger recognition and avoidance. A subset of isoforms is expressed in fat body cells and hemocytes, cells that are part of the insect immune response, and these isoforms are secreted into the hemolymph. The secreted form comprising the ectodomain can bind to bacteria, such as Escherichia coli, and may act as an opsonin enhancing their phagocytosis by hemocytes. The chain is Cell adhesion molecule Dscam1 from Drosophila melanogaster (Fruit fly).